The primary structure comprises 685 residues: MRLLIVLGLLWSLVATLLGSKWPEPVFGRLVSLGFPEKYGNHQDRSWTLTAPPGFRLRLYFTHFNLELSYRCEYDFVKLTSGTKVLATLCGQESTDTERAPGNDTFYSLGPSLKVTFHSDYSNEKPFTGFEAFYAAEDVDECRTSLGDSVPCDHYCHNYLGGYYCSCRVGYILHQNKHTCSALCSGQVFTGRSGFLSSPEYPQPYPKLSSCAYNIRLEEGFSITLDFVESFDVEMHPEAQCPYDSLKIQTDKREYGPFCGKTLPPRIETDSNKVTITFTTDESGNHTGWKIHYTSTAQPCPDPTAPPNGHISPVQATYVLKDSFSVFCKTGFELLQGSVPLKSFTAVCQKDGSWDRPIPECSIIDCGPPDDLPNGHVDYITGPEVTTYKAVIQYSCEETFYTMSSNGKYVCEADGFWTSSKGEKSLPVCKPVCGLSTHTSGGRIIGGQPAKPGDFPWQVLLLGETTAAGALIHDDWVLTAAHAVYGKTEAMSSLDIRMGILKRLSLIYTQAWPEAVFIHEGYTHGAGFDNDIALIKLKNKVTINRNIMPICLPRKEAASLMKTDFVGTVAGWGLTQKGFLARNLMFVDIPIVDHQKCATAYTKQPYPGAKVTVNMLCAGLDRGGKDSCRGDSGGALVFLDNETQRWFVGGIVSWGSINCGGSEQYGVYTKVTNYIPWIENIINNF.

The first 19 residues, Met-1 to Gly-19, serve as a signal peptide directing secretion. The 118-residue stretch at Ser-20 to Glu-137 folds into the CUB 1 domain. Ca(2+) is bound by residues Glu-67 and Asp-75. The cysteines at positions 72 and 90 are disulfide-linked. Residue Asn-103 is glycosylated (N-linked (GlcNAc...) asparagine). Residues Asp-120, Ser-122, Asn-123, Asp-138, and Val-139 each contribute to the Ca(2+) site. The region spanning Asp-138–Ser-181 is the EGF-like; calcium-binding domain. Cystine bridges form between Cys-152–Cys-165, Cys-167–Cys-180, Cys-184–Cys-211, and Cys-241–Cys-259. At Asn-158 the chain carries (3R)-3-hydroxyasparagine. 2 residues coordinate Ca(2+): Tyr-159 and Gly-162. The 113-residue stretch at Cys-184 to Thr-296 folds into the CUB 2 domain. A glycan (N-linked (GlcNAc...) asparagine) is linked at Asn-285. 2 consecutive Sushi domains span residues Gln-298–Ile-363 and Ile-364–Pro-431. Cystine bridges form between Cys-300–Cys-348, Cys-328–Cys-361, Cys-366–Cys-411, Cys-396–Cys-429, Cys-433–Cys-551, Cys-597–Cys-617, and Cys-628–Cys-659. The region spanning Ile-444 to Asn-683 is the Peptidase S1 domain. Active-site charge relay system residues include His-482 and Asp-531. Ser-632 serves as the catalytic Charge relay system. An N-linked (GlcNAc...) asparagine glycan is attached at Asn-641.

This sequence belongs to the peptidase S1 family. As to quaternary structure, homodimer; disulfide-linked. Binds MBL2. Isoform 2 binds to MASP1. Binds SERPING1. In terms of processing, N-glycosylated. The iron and 2-oxoglutarate dependent 3-hydroxylation of aspartate and asparagine is (R) stereospecific within EGF domains. As to expression, highly expressed in liver. Secreted in plasma.

It localises to the secreted. It catalyses the reaction Selective cleavage after Arg-223 in complement component C2 (-Ser-Leu-Gly-Arg-|-Lys-Ile-Gln-Ile) and after Arg-76 in complement component C4 (-Gly-Leu-Gln-Arg-|-Ala-Leu-Glu-Ile).. Functionally, serum protease that plays an important role in the activation of the complement system via mannose-binding lectin. After activation by auto-catalytic cleavage it cleaves C2 and C4, leading to their activation and to the formation of C3 convertase. In Rattus norvegicus (Rat), this protein is Mannan-binding lectin serine protease 2 (Masp2).